Reading from the N-terminus, the 336-residue chain is Dihydroorotate dehydrogenase (quinone) (336 aa).

Residues 62 to 66 (AGLDK) and Thr86 each bind FMN. Lys66 is a binding site for substrate. A substrate-binding site is contributed by 111–115 (NRMGF). The FMN site is built by Asn139 and Asn172. Asn172 lines the substrate pocket. The active-site Nucleophile is Ser175. Asn177 contacts substrate. FMN-binding residues include Lys217 and Thr245. Substrate is bound at residue 246–247 (NT). Residues Gly268, Gly297, and 318 to 319 (YS) contribute to the FMN site.

The protein belongs to the dihydroorotate dehydrogenase family. Type 2 subfamily. Monomer. FMN serves as cofactor.

Its subcellular location is the cell membrane. The catalysed reaction is (S)-dihydroorotate + a quinone = orotate + a quinol. Its pathway is pyrimidine metabolism; UMP biosynthesis via de novo pathway; orotate from (S)-dihydroorotate (quinone route): step 1/1. Functionally, catalyzes the conversion of dihydroorotate to orotate with quinone as electron acceptor. This is Dihydroorotate dehydrogenase (quinone) from Salmonella typhi.